A 376-amino-acid chain; its full sequence is Glutamate 5-kinase (376 aa).

Residue Lys15 coordinates ATP. Substrate is bound by residues Ser56, Asp143, and Asn155. 175–176 (SD) contributes to the ATP binding site. One can recognise a PUA domain in the interval 281-358 (KGTLTIDAGA…PDVMMILGIT (78 aa)).

It belongs to the glutamate 5-kinase family.

Its subcellular location is the cytoplasm. The enzyme catalyses L-glutamate + ATP = L-glutamyl 5-phosphate + ADP. It participates in amino-acid biosynthesis; L-proline biosynthesis; L-glutamate 5-semialdehyde from L-glutamate: step 1/2. Functionally, catalyzes the transfer of a phosphate group to glutamate to form L-glutamate 5-phosphate. The polypeptide is Glutamate 5-kinase (Rhodopseudomonas palustris (strain TIE-1)).